The sequence spans 313 residues: DNA-directed RNA polymerase subunit alpha (313 aa).

Residues 1–226 are alpha N-terminal domain (alpha-NTD); that stretch reads MLEIEKPKIE…EHMRLFLGLT (226 aa). Residues 242–313 form an alpha C-terminal domain (alpha-CTD) region; the sequence is TRDRLMDMSI…LGLSLRSSEE (72 aa).

The protein belongs to the RNA polymerase alpha chain family. As to quaternary structure, homodimer. The RNAP catalytic core consists of 2 alpha, 1 beta, 1 beta' and 1 omega subunit. When a sigma factor is associated with the core the holoenzyme is formed, which can initiate transcription.

The enzyme catalyses RNA(n) + a ribonucleoside 5'-triphosphate = RNA(n+1) + diphosphate. DNA-dependent RNA polymerase catalyzes the transcription of DNA into RNA using the four ribonucleoside triphosphates as substrates. The chain is DNA-directed RNA polymerase subunit alpha from Moorella thermoacetica (strain ATCC 39073 / JCM 9320).